Consider the following 206-residue polypeptide: VEL1-related protein YOR387C (206 aa).

An N-terminal signal peptide occupies residues 1 to 19 (MSFLNIFTFFSVLVSVATA). N-linked (GlcNAc...) asparagine glycosylation is found at Asn-26, Asn-48, Asn-91, Asn-139, Asn-152, and Asn-183.

This sequence belongs to the VEL1 family. Post-translationally, N-glycosylated.

The protein localises to the cytoplasm. It localises to the cytosol. The sequence is that of VEL1-related protein YOR387C from Saccharomyces cerevisiae (strain ATCC 204508 / S288c) (Baker's yeast).